Here is a 278-residue protein sequence, read N- to C-terminus: 3-methyl-2-oxobutanoate hydroxymethyltransferase (278 aa).

Mg(2+)-binding residues include D43 and D82. 3-methyl-2-oxobutanoate-binding positions include 43 to 44 (DS), D82, and K112. E114 contributes to the Mg(2+) binding site. E181 functions as the Proton acceptor in the catalytic mechanism.

This sequence belongs to the PanB family. Homodecamer; pentamer of dimers. The cofactor is Mg(2+).

Its subcellular location is the cytoplasm. It catalyses the reaction 3-methyl-2-oxobutanoate + (6R)-5,10-methylene-5,6,7,8-tetrahydrofolate + H2O = 2-dehydropantoate + (6S)-5,6,7,8-tetrahydrofolate. It participates in cofactor biosynthesis; (R)-pantothenate biosynthesis; (R)-pantoate from 3-methyl-2-oxobutanoate: step 1/2. Functionally, catalyzes the reversible reaction in which hydroxymethyl group from 5,10-methylenetetrahydrofolate is transferred onto alpha-ketoisovalerate to form ketopantoate. This Bacillus cereus (strain G9842) protein is 3-methyl-2-oxobutanoate hydroxymethyltransferase.